Consider the following 283-residue polypeptide: Pantothenate synthetase (283 aa).

30–37 (MGNLHDGH) provides a ligand contact to ATP. H37 acts as the Proton donor in catalysis. Residue Q61 coordinates (R)-pantoate. A beta-alanine-binding site is contributed by Q61. Position 149–152 (149–152 (GEKD)) interacts with ATP. A (R)-pantoate-binding site is contributed by Q155. Residue 186 to 189 (LSSR) coordinates ATP.

This sequence belongs to the pantothenate synthetase family. In terms of assembly, homodimer.

The protein resides in the cytoplasm. The enzyme catalyses (R)-pantoate + beta-alanine + ATP = (R)-pantothenate + AMP + diphosphate + H(+). It participates in cofactor biosynthesis; (R)-pantothenate biosynthesis; (R)-pantothenate from (R)-pantoate and beta-alanine: step 1/1. Its function is as follows. Catalyzes the condensation of pantoate with beta-alanine in an ATP-dependent reaction via a pantoyl-adenylate intermediate. The polypeptide is Pantothenate synthetase (Escherichia coli O17:K52:H18 (strain UMN026 / ExPEC)).